A 328-amino-acid polypeptide reads, in one-letter code: Nickel import system permease protein NikB (328 aa).

The next 6 membrane-spanning stretches (helical) occupy residues 11 to 31 (LMQM…LMKL), 104 to 124 (LLIS…LGII), 139 to 159 (VIST…LLFI), 170 to 190 (ILSQ…AYII), 229 to 249 (ILPI…GTVV), and 279 to 299 (VLFI…LTLL). The ABC transmembrane type-1 domain occupies 100–297 (APITLLISFS…IINTIADLLT (198 aa)).

The protein belongs to the binding-protein-dependent transport system permease family. OppBC subfamily. As to quaternary structure, the complex is composed of two ATP-binding proteins (NikD and NikE), two transmembrane proteins (NikB and NikC) and a solute-binding protein (NikA).

The protein resides in the cell membrane. In terms of biological role, part of the ABC transporter complex NikABCDE (Opp2) involved in nickel import. Probably responsible for the translocation of the substrate across the membrane. This chain is Nickel import system permease protein NikB, found in Staphylococcus aureus (strain bovine RF122 / ET3-1).